Reading from the N-terminus, the 370-residue chain is Putative agmatine deiminase (370 aa).

The active-site Amidino-cysteine intermediate is the Cys-361.

The protein belongs to the agmatine deiminase family.

The catalysed reaction is agmatine + H2O = N-carbamoylputrescine + NH4(+). In Shewanella baltica (strain OS155 / ATCC BAA-1091), this protein is Putative agmatine deiminase.